The chain runs to 1378 residues: Carboxypeptidase D (1378 aa).

A signal peptide spans 1 to 37 (MASGWDERPPWRLESLRLLPPPPLLLLLLLLRSSAQA). Residues 38 to 1297 (AHIKKAEATT…DNRIFGLPRE (1260 aa)) lie on the Extracellular side of the membrane. The Peptidase M14 1 domain occupies 62–380 (HYYHEAALGE…ESLITLIEKV (319 aa)). Zn(2+)-binding residues include histidine 139 and glutamate 142. Positions 162–164 (RGD) match the Cell attachment site motif. 2 N-linked (GlcNAc...) asparagine glycosylation sites follow: asparagine 172 and asparagine 217. The interval 189 to 232 (RAREGDCGLGDSGPPGTSGRDNSRGRDLNRSFPDQFSTGEPPSL) is disordered. Histidine 257 serves as a coordination point for Zn(2+). Tyrosine 265 is modified (phosphotyrosine). Serine 270 carries the post-translational modification Phosphoserine. The active-site Proton donor/acceptor is the glutamate 350. 4 N-linked (GlcNAc...) asparagine glycosylation sites follow: asparagine 399, asparagine 410, asparagine 429, and asparagine 522. Residues 502 to 792 (HHHHFPDMEI…RSLIQFMKQV (291 aa)) form the Peptidase M14 2 domain. Residues histidine 564 and glutamate 567 each coordinate Zn(2+). Asparagine 626 carries an N-linked (GlcNAc...) asparagine glycan. Residue histidine 671 participates in Zn(2+) binding. Glutamate 762 serves as the catalytic Proton donor/acceptor. N-linked (GlcNAc...) asparagine glycosylation is found at asparagine 811, asparagine 855, asparagine 867, asparagine 879, asparagine 953, and asparagine 976. The tract at residues 875 to 898 (TDANNESKKGKGHSTSTDDTSDPT) is disordered. Residues 930–1209 (RYHSYKDLSE…KSLLSMLVEV (280 aa)) enclose the Peptidase M14 3 domain. Residues 1039 to 1048 (RERAQEKDCT) are compositionally biased toward basic and acidic residues. The tract at residues 1039-1068 (RERAQEKDCTSKTGHTNARGRDLDTDFTSN) is disordered. 2 N-linked (GlcNAc...) asparagine glycosylation sites follow: asparagine 1068 and asparagine 1140. A helical transmembrane segment spans residues 1298–1318 (LVVTVSGATMSALILTACIIW). 3 S-palmitoyl cysteine lipidation sites follow: cysteine 1315, cysteine 1319, and cysteine 1321. At 1319 to 1378 (CICSIKSNRHKDGFHRLRQHHDEYEDEIRMMSTGSKKSLLSHEFQDETDTEEETLYSSKH) the chain is on the cytoplasmic side. 2 positions are modified to phosphoserine: serine 1356 and serine 1359. A disordered region spans residues 1357–1378 (LLSHEFQDETDTEEETLYSSKH). Phosphothreonine occurs at positions 1366 and 1368.

This sequence belongs to the peptidase M14 family. Requires Zn(2+) as cofactor. In terms of tissue distribution, isoform 1 is widely expressed with highest levels in the hippocampus, spinal cord, atrium, colon, testis and ovaries. Detected in the liver of females but not males. Isoform 2 is not detected in brain or lung.

It is found in the cell membrane. The protein resides in the nucleus. The enzyme catalyses Releases C-terminal Arg and Lys from polypeptides.. This chain is Carboxypeptidase D, found in Rattus norvegicus (Rat).